A 393-amino-acid chain; its full sequence is Serine/threonine protein kinase AFUB_078980 (393 aa).

In terms of domain architecture, Protein kinase spans 61-390 (YQVLSKLGFG…APELLTDPWL (330 aa)). Residues 67-75 (LGFGANSTV) and Lys90 contribute to the ATP site. The active-site Proton acceptor is Asp190.

Belongs to the protein kinase superfamily. CMGC Ser/Thr protein kinase family.

It catalyses the reaction L-seryl-[protein] + ATP = O-phospho-L-seryl-[protein] + ADP + H(+). The catalysed reaction is L-threonyl-[protein] + ATP = O-phospho-L-threonyl-[protein] + ADP + H(+). Serine/threonine protein kinase; part of the subtelomeric hrmA-associated cluster (HAC) containing genes that alter the hyphal surface (such as reduced total chitin or increased beta-glucan exposure) and perturb inter-hyphal interactions within the developing biofilms, resulting in a loss of vertically aligned polarized growing filaments. Consequently, this hypoxia-typic morphotype (called H-MORPH) with altered biofilm architecture leads to increased hypoxia fitness, increased host inflammation, rapid disease progression, and mortality in a murine model of invasive aspergillosis. This Aspergillus fumigatus (strain CBS 144.89 / FGSC A1163 / CEA10) (Neosartorya fumigata) protein is Serine/threonine protein kinase AFUB_078980.